The chain runs to 152 residues: Actin-related protein 2/3 complex subunit 5-B (152 aa).

The segment at 21–44 is disordered; sequence NKFVDDQLQEEPAEPQGPDEAEVD. A compositionally biased stretch (acidic residues) spans 27-43; the sequence is QLQEEPAEPQGPDEAEV.

The protein belongs to the ARPC5 family. In terms of assembly, component of the Arp2/3 complex composed of actr2/arp2, actr3/arp3, arpc1 (arpc1a or arpc1b), arpc2, arpc3, arpc4 and arpc5.

Its subcellular location is the cytoplasm. It is found in the cytoskeleton. The protein localises to the cell projection. The protein resides in the nucleus. Component of the Arp2/3 complex, a multiprotein complex that mediates actin polymerization upon stimulation by nucleation-promoting factor (NPF). The Arp2/3 complex mediates the formation of branched actin networks in the cytoplasm, providing the force for cell motility. In addition to its role in the cytoplasmic cytoskeleton, the Arp2/3 complex also promotes actin polymerization in the nucleus, thereby regulating gene transcription and repair of damaged DNA. The Arp2/3 complex promotes homologous recombination (HR) repair in response to DNA damage by promoting nuclear actin polymerization, leading to drive motility of double-strand breaks (DSBs). In Xenopus laevis (African clawed frog), this protein is Actin-related protein 2/3 complex subunit 5-B (arpc5-b).